Reading from the N-terminus, the 557-residue chain is Arginine--tRNA ligase (557 aa).

The 'HIGH' region signature appears at 132–142 (ANPTGDLHLGH).

This sequence belongs to the class-I aminoacyl-tRNA synthetase family. As to quaternary structure, monomer.

It is found in the cytoplasm. It catalyses the reaction tRNA(Arg) + L-arginine + ATP = L-arginyl-tRNA(Arg) + AMP + diphosphate. This Bacillus pumilus (strain SAFR-032) protein is Arginine--tRNA ligase.